A 263-amino-acid polypeptide reads, in one-letter code: Lens fiber major intrinsic protein (263 aa).

Residues 1 to 9 (MWELRSASF) lie on the Cytoplasmic side of the membrane. The helical transmembrane segment at 10 to 29 (WRAIFAEFFATLFYVFFGLG) threads the bilayer. Over 30–41 (ASLRWAPGPLHV) the chain is Extracellular. The helical transmembrane segment at 42–59 (LQVALAFGLALAXLVQTV) threads the bilayer. The Cytoplasmic portion of the chain corresponds to 60-61 (GH). An intramembrane region (discontinuously helical) is located at residues 62-77 (ISGAHVNPAVTFXFLV). An NPA 1 motif is present at residues 68–70 (NPA). The Cytoplasmic segment spans residues 78-82 (GSQMS). The chain crosses the membrane as a helical span at residues 83–106 (LLRAFCYMAAQLLGAVAGAAVLYS). Residues 107–127 (VTPPAVRGNLALNTLHAGVSV) lie on the Extracellular side of the membrane. The helical transmembrane segment at 128 to 148 (XQATTVEIFLTLQFVLCIFAT) threads the bilayer. The Cytoplasmic portion of the chain corresponds to 149 to 156 (YDERRNGR). The chain crosses the membrane as a helical span at residues 157 to 175 (LGSVALAVGFSLTLGHLFG). Topologically, residues 176–178 (MYY) are extracellular. Positions 179-193 (TGAGMNPARSFAPAI) form an intramembrane region, discontinuously helical. An NPA 2 motif is present at residues 184 to 186 (NPA). The Extracellular segment spans residues 194-200 (LTRNFTN). A helical transmembrane segment spans residues 201–222 (HWVYWVGPIIGGGLGSLLYDFL). Residues 223–263 (LFPRLKSVSERLSILKGTRPSDNNGQPEGTGEPVELKTQAL) lie on the Cytoplasmic side of the membrane. The tract at residues 227–237 (LKSVSERLSIL) is interaction with CALM. Residues Ser-235 and Ser-243 each carry the phosphoserine modification. Residues 238–263 (KGTRPSDNNGQPEGTGEPVELKTQAL) are disordered. Asn-245 and Asn-246 each carry deamidated asparagine; by deterioration.

This sequence belongs to the MIP/aquaporin (TC 1.A.8) family. Homotetramer; each monomer provides an independent water pore. Two homotetramers on opposing membranes can dimerize, forming a cell-cell junction. Interacts with CALM; the calcium-calmodulin/CALM complex interacts with the cytoplasmic domains of two aquaporins, leading to channel closure. Interacts with BFSP1 (via C-terminus); prevents calcium-dependent inhibition of the water channel activity. Post-translationally, subject to partial proteolytic cleavage in the eye lens core. Partial proteolysis promotes interactions between tetramers from adjoining membranes. Fatty acylated at Met-1 and Lys-238. The acyl modifications, in decreasing order of ion abundance, are: oleoyl (C18:1) &gt; palmitoyl (C16:0) &gt; stearoyl (C18:0) &gt; eicosenoyl (C20:1) &gt; dihomo-gamma-linolenoyl (C20:3) &gt; palmitoleoyl (C16:1) &gt; eicosadienoyl (C20:2). As to expression, detected in eye lens (at protein level).

The protein localises to the cell membrane. It localises to the cell junction. The catalysed reaction is H2O(in) = H2O(out). Its activity is regulated as follows. The water channel activity is inhibited by calcium through calmodulin/CALM. Functionally, aquaporins form homotetrameric transmembrane channels, with each monomer independently mediating water transport across the plasma membrane along its osmotic gradient. Specifically expressed in lens fiber cells, this aquaporin is crucial for maintaining lens water homeostasis and transparency. Beyond water permeability, it also acts as a cell-to-cell adhesion molecule, forming thin junctions between lens fiber cells that are essential for maintaining the ordered structure and transparency of the lens. The protein is Lens fiber major intrinsic protein of Cavia porcellus (Guinea pig).